An 853-amino-acid chain; its full sequence is Auxin response factor 23 (853 aa).

The tract at residues lysine 121 to histidine 141 is disordered. A DNA-binding region (TF-B3) is located at residues phenylalanine 149–methionine 251. 2 disordered regions span residues glutamate 422–proline 471 and proline 647–serine 723. The span at proline 425 to lysine 455 shows a compositional bias: polar residues. Residues glutamate 672 to aspartate 686 are compositionally biased toward basic and acidic residues. Over residues proline 706–serine 723 the composition is skewed to polar residues. The 85-residue stretch at arginine 725–glutamate 809 folds into the PB1 domain. Residues proline 815–cysteine 853 are disordered. Polar residues predominate over residues leucine 843 to cysteine 853.

It belongs to the ARF family. Homodimers and heterodimers.

It is found in the nucleus. Functionally, auxin response factors (ARFs) are transcriptional factors that bind specifically to the DNA sequence 5'-TGTCTC-3' found in the auxin-responsive promoter elements (AuxREs). The sequence is that of Auxin response factor 23 (ARF23) from Oryza sativa subsp. indica (Rice).